The primary structure comprises 952 residues: Protein translocase subunit SecA (952 aa).

ATP-binding positions include Q135, 153–157 (GEGKT), and D575. Residues 916–930 (VSAKAATQPAAPAAK) are compositionally biased toward low complexity. Residues 916–952 (VSAKAATQPAAPAAKEVGRNDPCPCGSGKKYKKCCGK) are disordered. Positions 938, 940, 949, and 950 each coordinate Zn(2+).

This sequence belongs to the SecA family. In terms of assembly, monomer and homodimer. Part of the essential Sec protein translocation apparatus which comprises SecA, SecYEG and auxiliary proteins SecDF. Other proteins may also be involved. Requires Zn(2+) as cofactor.

The protein localises to the cell membrane. It is found in the cytoplasm. It carries out the reaction ATP + H2O + cellular proteinSide 1 = ADP + phosphate + cellular proteinSide 2.. Its function is as follows. Part of the Sec protein translocase complex. Interacts with the SecYEG preprotein conducting channel. Has a central role in coupling the hydrolysis of ATP to the transfer of proteins into and across the cell membrane, serving as an ATP-driven molecular motor driving the stepwise translocation of polypeptide chains across the membrane. The protein is Protein translocase subunit SecA of Dehalococcoides mccartyi (strain ATCC BAA-2266 / KCTC 15142 / 195) (Dehalococcoides ethenogenes (strain 195)).